Reading from the N-terminus, the 90-residue chain is Small ribosomal subunit protein uS15c (90 aa).

Belongs to the universal ribosomal protein uS15 family. In terms of assembly, part of the 30S ribosomal subunit.

The protein resides in the plastid. It localises to the chloroplast. The polypeptide is Small ribosomal subunit protein uS15c (rps15-A) (Ipomoea purpurea (Common morning glory)).